The sequence spans 423 residues: Serine hydroxymethyltransferase (423 aa).

(6S)-5,6,7,8-tetrahydrofolate is bound by residues L126 and 130 to 132 (GHL). K235 bears the N6-(pyridoxal phosphate)lysine mark.

Belongs to the SHMT family. As to quaternary structure, homodimer. Pyridoxal 5'-phosphate is required as a cofactor.

It is found in the cytoplasm. The catalysed reaction is (6R)-5,10-methylene-5,6,7,8-tetrahydrofolate + glycine + H2O = (6S)-5,6,7,8-tetrahydrofolate + L-serine. The protein operates within one-carbon metabolism; tetrahydrofolate interconversion. It participates in amino-acid biosynthesis; glycine biosynthesis; glycine from L-serine: step 1/1. In terms of biological role, catalyzes the reversible interconversion of serine and glycine with tetrahydrofolate (THF) serving as the one-carbon carrier. This reaction serves as the major source of one-carbon groups required for the biosynthesis of purines, thymidylate, methionine, and other important biomolecules. Also exhibits THF-independent aldolase activity toward beta-hydroxyamino acids, producing glycine and aldehydes, via a retro-aldol mechanism. This Sorangium cellulosum (strain So ce56) (Polyangium cellulosum (strain So ce56)) protein is Serine hydroxymethyltransferase.